The sequence spans 414 residues: Lipoyl synthase, mitochondrial (414 aa).

The transit peptide at 1–18 (MYRRSVGVLFVGRNTRWI) directs the protein to the mitochondrion. The span at 51 to 67 (GNSTEVENATSQLTGTS) shows a compositional bias: polar residues. Residues 51 to 75 (GNSTEVENATSQLTGTSGKRRKGNR) form a disordered region. [4Fe-4S] cluster is bound by residues Cys150, Cys155, Cys161, Cys181, Cys185, Cys188, and Ser396. The 222-residue stretch at 164–385 (GKDKSKATAT…KERALEMGFL (222 aa)) folds into the Radical SAM core domain.

The protein belongs to the radical SAM superfamily. Lipoyl synthase family. Requires [4Fe-4S] cluster as cofactor.

It localises to the mitochondrion. The enzyme catalyses [[Fe-S] cluster scaffold protein carrying a second [4Fe-4S](2+) cluster] + N(6)-octanoyl-L-lysyl-[protein] + 2 oxidized [2Fe-2S]-[ferredoxin] + 2 S-adenosyl-L-methionine + 4 H(+) = [[Fe-S] cluster scaffold protein] + N(6)-[(R)-dihydrolipoyl]-L-lysyl-[protein] + 4 Fe(3+) + 2 hydrogen sulfide + 2 5'-deoxyadenosine + 2 L-methionine + 2 reduced [2Fe-2S]-[ferredoxin]. Its pathway is protein modification; protein lipoylation via endogenous pathway; protein N(6)-(lipoyl)lysine from octanoyl-[acyl-carrier-protein]: step 2/2. Catalyzes the radical-mediated insertion of two sulfur atoms into the C-6 and C-8 positions of the octanoyl moiety bound to the lipoyl domains of lipoate-dependent enzymes, thereby converting the octanoylated domains into lipoylated derivatives. The chain is Lipoyl synthase, mitochondrial from Saccharomyces cerevisiae (strain RM11-1a) (Baker's yeast).